Consider the following 475-residue polypeptide: MSPKTETKASVGFKAGVKDYRLTYYTPEYQTKDTDILAAFRVTPQPGVPPEEAGAAVAAESSTGTWTTVWTDGLTSLDRYKGRCYDIEPVAGEESQFIAFVAYPLDLFEEGSVTNLFTSIVGNVFGFKALRALRLEDLRIPPAYSKTFQGPPHGIQVERDKLNKYGRPLLGCTIKPKLGLSAKNYGRAVYECLRGGLDFTKDDENVNSQPFMRWRDRFVFCAEAIYKAQAETGEIKGHYLNATAGTCEEMMKRAVFARELGVPIVMHDYLTGGFTANTSLAHYCRDNGLLLHIHRAMHAVIDRQKNHGMHFRVLAKALRMSGGDHIHGGTVVGKLEGEREITLGFVDLLRDDFIEKDRSRGIYFTQDWVSMPGVLPVASGGIHVWHMPALTEIFGDDSVLQFGGGTLGHPWGNAPGAVANRVALEACVQARNEGRDLAREGNEVIREASKWSPELAAACEIWKEIKFEFEAVDTI.

Positions 1-2 (MS) are excised as a propeptide. An N-acetylproline modification is found at Pro-3. Lys-14 is modified (N6,N6,N6-trimethyllysine). Residues Asn-123 and Thr-173 each contribute to the substrate site. The Proton acceptor role is filled by Lys-175. Substrate is bound at residue Lys-177. Mg(2+)-binding residues include Lys-201, Asp-203, and Glu-204. Residue Lys-201 is modified to N6-carboxylysine. His-294 acts as the Proton acceptor in catalysis. Residues Arg-295, His-327, and Ser-379 each coordinate substrate.

The protein belongs to the RuBisCO large chain family. Type I subfamily. Heterohexadecamer of 8 large chains and 8 small chains; disulfide-linked. The disulfide link is formed within the large subunit homodimers. Requires Mg(2+) as cofactor. In terms of processing, the disulfide bond which can form in the large chain dimeric partners within the hexadecamer appears to be associated with oxidative stress and protein turnover.

The protein localises to the plastid. It localises to the chloroplast. It catalyses the reaction 2 (2R)-3-phosphoglycerate + 2 H(+) = D-ribulose 1,5-bisphosphate + CO2 + H2O. The enzyme catalyses D-ribulose 1,5-bisphosphate + O2 = 2-phosphoglycolate + (2R)-3-phosphoglycerate + 2 H(+). Functionally, ruBisCO catalyzes two reactions: the carboxylation of D-ribulose 1,5-bisphosphate, the primary event in carbon dioxide fixation, as well as the oxidative fragmentation of the pentose substrate in the photorespiration process. Both reactions occur simultaneously and in competition at the same active site. The chain is Ribulose bisphosphate carboxylase large chain from Picea abies (Norway spruce).